A 181-amino-acid chain; its full sequence is Ribosome maturation factor RimM (181 aa).

A PRC barrel domain is found at 103 to 181; sequence EGDYYWSQLE…EMVVDWDPEF (79 aa).

Belongs to the RimM family. As to quaternary structure, binds ribosomal protein uS19.

The protein localises to the cytoplasm. In terms of biological role, an accessory protein needed during the final step in the assembly of 30S ribosomal subunit, possibly for assembly of the head region. Essential for efficient processing of 16S rRNA. May be needed both before and after RbfA during the maturation of 16S rRNA. It has affinity for free ribosomal 30S subunits but not for 70S ribosomes. This Marinomonas sp. (strain MWYL1) protein is Ribosome maturation factor RimM.